Reading from the N-terminus, the 661-residue chain is Ubiquitin carboxyl-terminal hydrolase 51 (661 aa).

Positions 1–144 are disordered; the sequence is MRGTQGAQEM…SENSLLEVGS (144 aa). A compositionally biased stretch (polar residues) spans 21–30; that stretch reads TSENLTSRGS. Basic residues predominate over residues 53–71; it reads PRRKPRPRPQPRSRSRGGR. Over residues 75 to 96 the composition is skewed to pro residues; sequence APPPPPAKPPPPPPAPPPPPLP. The UBP-type zinc-finger motif lies at 149–267; that stretch reads TGCCHVESFK…KETKEKILGL (119 aa). Positions 151, 153, 192, 195, 205, 208, 213, 218, 222, 228, 241, and 244 each coordinate Zn(2+). The 337-residue stretch at 320–656 folds into the USP domain; sequence RGLINLGNTC…EGYLLFYHRQ (337 aa). Catalysis depends on cysteine 329, which acts as the Nucleophile. The active-site Proton acceptor is the histidine 615.

Belongs to the peptidase C19 family. Interacts with H2A.

The protein localises to the chromosome. The catalysed reaction is Thiol-dependent hydrolysis of ester, thioester, amide, peptide and isopeptide bonds formed by the C-terminal Gly of ubiquitin (a 76-residue protein attached to proteins as an intracellular targeting signal).. Specifically deubiquitinates 'Lys-14' (H2AK13Ub) and 'Lys-16'(H2AK15Ub) of histone H2A regulating the DNA damage response at double-strand breaks (DSBs). USP51 is recruited to chromatin after DNA damage and regulates the dynamic assembly/disassembly of TP53BP1 and BRCA1. Functions in DNA double-strand break repair also by mediating the deubiquitination and subsequent stabilization of DGCR8, leading to the recruitment of DGCR8 binding partners to double strand breaks such as RNF168 or MDC1. In addition, promotes the deubiquitination and stabilization of the transcriptional repressor ZEB1. This is Ubiquitin carboxyl-terminal hydrolase 51 from Mus musculus (Mouse).